A 491-amino-acid chain; its full sequence is Chromosomal replication initiator protein DnaA (491 aa).

Positions 1-68 (MTSIWGQIQH…RTAACGVIGD (68 aa)) are domain I, interacts with DnaA modulators. Residues 68-146 (DTVEVVVTAG…PLDWAPVPQS (79 aa)) form a domain II region. The domain III, AAA+ region stretch occupies residues 147-364 (RTNWRFSFDD…SCLHNLILKA (218 aa)). ATP-binding residues include Gly190, Gly192, Lys193, and Thr194. The tract at residues 365 to 491 (KLLNRQISLE…RNGRITHARH (127 aa)) is domain IV, binds dsDNA.

Belongs to the DnaA family. In terms of assembly, oligomerizes as a right-handed, spiral filament on DNA at oriC.

The protein localises to the cytoplasm. Functionally, plays an essential role in the initiation and regulation of chromosomal replication. ATP-DnaA binds to the origin of replication (oriC) to initiate formation of the DNA replication initiation complex once per cell cycle. Binds the DnaA box (a 9 base pair repeat at the origin) and separates the double-stranded (ds)DNA. Forms a right-handed helical filament on oriC DNA; dsDNA binds to the exterior of the filament while single-stranded (ss)DNA is stabiized in the filament's interior. The ATP-DnaA-oriC complex binds and stabilizes one strand of the AT-rich DNA unwinding element (DUE), permitting loading of DNA polymerase. After initiation quickly degrades to an ADP-DnaA complex that is not apt for DNA replication. Binds acidic phospholipids. This Nitratidesulfovibrio vulgaris (strain ATCC 29579 / DSM 644 / CCUG 34227 / NCIMB 8303 / VKM B-1760 / Hildenborough) (Desulfovibrio vulgaris) protein is Chromosomal replication initiator protein DnaA.